Consider the following 771-residue polypeptide: Phosphoglycerate kinase (771 aa).

A phosphoglycerate kinase region spans residues 1-406 (MKKLITDLNL…PGIDAIQNYE (406 aa)). Residues 20–22 (DLN), R35, 58–61 (HLGR), R118, and R155 contribute to the substrate site. Residues K206, G295, E334, and 361 to 364 (GGDS) contribute to the ATP site. The tract at residues 407–771 (QTYEQYDSQV…KRFWFFGRKR (365 aa)) is unknown.

It in the N-terminal section; belongs to the phosphoglycerate kinase family. As to quaternary structure, monomer.

The protein resides in the cytoplasm. The enzyme catalyses (2R)-3-phosphoglycerate + ATP = (2R)-3-phospho-glyceroyl phosphate + ADP. It participates in carbohydrate degradation; glycolysis; pyruvate from D-glyceraldehyde 3-phosphate: step 2/5. This chain is Phosphoglycerate kinase (pgk), found in Mycoplasmopsis pulmonis (strain UAB CTIP) (Mycoplasma pulmonis).